The primary structure comprises 346 residues: Methylthioribose-1-phosphate isomerase 1 (346 aa).

Substrate-binding positions include 48–50 (RGA), Arg-91, and Gln-196. Asp-237 (proton donor) is an active-site residue. 247–248 (NK) provides a ligand contact to substrate.

Belongs to the eIF-2B alpha/beta/delta subunits family. MtnA subfamily.

It carries out the reaction 5-(methylsulfanyl)-alpha-D-ribose 1-phosphate = 5-(methylsulfanyl)-D-ribulose 1-phosphate. It functions in the pathway amino-acid biosynthesis; L-methionine biosynthesis via salvage pathway; L-methionine from S-methyl-5-thio-alpha-D-ribose 1-phosphate: step 1/6. Functionally, catalyzes the interconversion of methylthioribose-1-phosphate (MTR-1-P) into methylthioribulose-1-phosphate (MTRu-1-P). The sequence is that of Methylthioribose-1-phosphate isomerase 1 from Pseudothermotoga lettingae (strain ATCC BAA-301 / DSM 14385 / NBRC 107922 / TMO) (Thermotoga lettingae).